A 274-amino-acid chain; its full sequence is MSLQEEIIAQLGVKPIIDPEEEIRKSVDFLKAYLRKHPFLKSYVLGISGGQDSTLAGRLAQLAVEEMRAETRDDSYRFIAVRLPYGVQADEDDAQKALTFIQPDVSLTVNIKESADAMTRAVEATGAKVSDFNKGNIKARSRMIAQYALAGSYSGAVIGTDHAAENVTAFFTKFGDGGADILPLYRLNKRQGKQLLAALGADPALYEKVPTADLEEEKPGIADEVALGVTYNEIDDYLEGKSVSAQAQETIESWWHKGQHKRHLPITIFDEFWK.

46–53 (GISGGQDS) contributes to the ATP binding site. Aspartate 52 lines the Mg(2+) pocket. Position 140 (arginine 140) interacts with deamido-NAD(+). Threonine 160 is an ATP binding site. Glutamate 165 lines the Mg(2+) pocket. Residues lysine 173 and aspartate 180 each coordinate deamido-NAD(+). ATP is bound by residues lysine 189 and threonine 211. A deamido-NAD(+)-binding site is contributed by 260–261 (HK).

The protein belongs to the NAD synthetase family. Homodimer.

The enzyme catalyses deamido-NAD(+) + NH4(+) + ATP = AMP + diphosphate + NAD(+) + H(+). The protein operates within cofactor biosynthesis; NAD(+) biosynthesis; NAD(+) from deamido-NAD(+) (ammonia route): step 1/1. Functionally, catalyzes the ATP-dependent amidation of deamido-NAD to form NAD. Uses ammonia as a nitrogen source. This is NH(3)-dependent NAD(+) synthetase from Streptococcus gordonii (strain Challis / ATCC 35105 / BCRC 15272 / CH1 / DL1 / V288).